The primary structure comprises 70 residues: MKKDIHPKYVEITATCSCGNVIKTRSTVGHDLNLDVCGNCHPFFTGKQRVVDTGGRVERFNKRFSIPGSK.

Residues C16, C18, C37, and C40 each contribute to the Zn(2+) site.

This sequence belongs to the bacterial ribosomal protein bL31 family. Type A subfamily. Part of the 50S ribosomal subunit. Zn(2+) is required as a cofactor.

In terms of biological role, binds the 23S rRNA. This is Large ribosomal subunit protein bL31 from Cronobacter sakazakii (strain ATCC BAA-894) (Enterobacter sakazakii).